We begin with the raw amino-acid sequence, 365 residues long: Methylthioribose-1-phosphate isomerase (365 aa).

Substrate contacts are provided by residues 53 to 55, Arg90, and Gln201; that span reads RGA. The active-site Proton donor is the Asp242. 252–253 provides a ligand contact to substrate; sequence NK.

The protein belongs to the eIF-2B alpha/beta/delta subunits family. MtnA subfamily.

The enzyme catalyses 5-(methylsulfanyl)-alpha-D-ribose 1-phosphate = 5-(methylsulfanyl)-D-ribulose 1-phosphate. It participates in amino-acid biosynthesis; L-methionine biosynthesis via salvage pathway; L-methionine from S-methyl-5-thio-alpha-D-ribose 1-phosphate: step 1/6. Catalyzes the interconversion of methylthioribose-1-phosphate (MTR-1-P) into methylthioribulose-1-phosphate (MTRu-1-P). The polypeptide is Methylthioribose-1-phosphate isomerase (Methylorubrum extorquens (strain CM4 / NCIMB 13688) (Methylobacterium extorquens)).